Consider the following 371-residue polypeptide: MYNETPIKRRPSTRIYVGNVPIGDGAPIAVQSMTNTKTTDVEATIAQIRALEKVGADIVRVSVPTMDAAEAFKIIKQSVNVPLVADIHFDYRIALKVAEYGVDCLRINPGNIGNEERIRSVVECARDKNIPIRIGVNGGSLEKDLMDKYKEPTPEALLESAMRHVDILDRMNFDQFKVSVKASDVFLAVESYRLLAKQIRQPLHLGITEAGGARAGSVKSAVGLGMLLAEGIGDTLRISLAADPVEEIKVGFDILKSLRIRSRGINFIACPSCSRQEFDVISTVNELERRLEDVTTAMDVSIIGCVVNGPGEALVSHIGLTGGHNKSGYYDEGERQKERFDNDNLVDSLEAKIRAKASQLANRIQVKDTTE.

Cys-270, Cys-273, Cys-305, and Glu-312 together coordinate [4Fe-4S] cluster.

This sequence belongs to the IspG family. [4Fe-4S] cluster is required as a cofactor.

It catalyses the reaction (2E)-4-hydroxy-3-methylbut-2-enyl diphosphate + oxidized [flavodoxin] + H2O + 2 H(+) = 2-C-methyl-D-erythritol 2,4-cyclic diphosphate + reduced [flavodoxin]. The protein operates within isoprenoid biosynthesis; isopentenyl diphosphate biosynthesis via DXP pathway; isopentenyl diphosphate from 1-deoxy-D-xylulose 5-phosphate: step 5/6. Functionally, converts 2C-methyl-D-erythritol 2,4-cyclodiphosphate (ME-2,4cPP) into 1-hydroxy-2-methyl-2-(E)-butenyl 4-diphosphate. The polypeptide is 4-hydroxy-3-methylbut-2-en-1-yl diphosphate synthase (flavodoxin) (Shewanella sp. (strain W3-18-1)).